Reading from the N-terminus, the 564-residue chain is Keratin, type II cytoskeletal 6C (564 aa).

The span at 1–11 shows a compositional bias: low complexity; that stretch reads MASTSTTIRSH. A disordered region spans residues 1–23; the sequence is MASTSTTIRSHSSSRRGFSANSA. Ala2 is subject to N-acetylalanine. The interval 2-162 is head; it reads ASTSTTIRSH…DPAIQRVRAE (161 aa). At Ser60 the chain carries Phosphoserine. The interval 163–198 is coil 1A; sequence EREQIKTLNNKFASFIDKVRFLEQQNKVLDTKWTLL. The region spanning 163-476 is the IF rod domain; the sequence is EREQIKTLNN…KLLEGEECRL (314 aa). The tract at residues 199–217 is linker 1; the sequence is QEQGTKTVRQNLEPLFEQY. Residues 218 to 309 are coil 1B; sequence INNLRRQLDS…ALYDAELSQM (92 aa). The linker 12 stretch occupies residues 310 to 333; it reads QTHISDTSVVLSMDNNRNLDLDSI. Residues 334 to 472 are coil 2; the sequence is IAEVKAQYEE…ATYRKLLEGE (139 aa). Positions 473–564 are tail; sequence ECRLNGEGVG…SSSSRKSYKH (92 aa).

This sequence belongs to the intermediate filament family. Heterodimer of a type I and a type II keratin. KRT6 isomers associate with KRT16 and/or KRT17. In terms of tissue distribution, constitutively expressed in distinct types of epithelia such as those in oral mucosa, esophagus, papillae of tongue and hair follicle outer root sheath.

This chain is Keratin, type II cytoskeletal 6C (KRT6C), found in Homo sapiens (Human).